The sequence spans 175 residues: Ribosome maturation factor RimM (175 aa).

The PRC barrel domain maps to 99 to 172; sequence ADEYHVSDLI…RLEVDAPPGL (74 aa).

It belongs to the RimM family. In terms of assembly, binds ribosomal protein uS19.

It localises to the cytoplasm. In terms of biological role, an accessory protein needed during the final step in the assembly of 30S ribosomal subunit, possibly for assembly of the head region. Essential for efficient processing of 16S rRNA. May be needed both before and after RbfA during the maturation of 16S rRNA. It has affinity for free ribosomal 30S subunits but not for 70S ribosomes. This is Ribosome maturation factor RimM from Picosynechococcus sp. (strain ATCC 27264 / PCC 7002 / PR-6) (Agmenellum quadruplicatum).